Reading from the N-terminus, the 822-residue chain is Calpain-3 (822 aa).

A disordered region spans residues 1-36; sequence MPTVISASVAPRTGAEPRSPGPIAQAAQGKGTEAGG. The region spanning 74–418 is the Calpain catalytic domain; sequence LFVDPEFPPD…FTKLEICNLT (345 aa). Active-site residues include C129, H335, and N359. The tract at residues 419-587 is domain III; sequence ADALESDKLQ…KRNLSEEVEN (169 aa). The linker stretch occupies residues 588–649; the sequence is TISVDRPVKK…LKPGNIDQES (62 aa). The tract at residues 600–651 is disordered; sequence PKPIIFGSDRANSNKELGVDQESEEGKDNTSPDKQAKSPQLKPGNIDQESKE. The segment covering 623–635 has biased composition (basic and acidic residues); it reads EEGKDNTSPDKQA. EF-hand domains are found at residues 650 to 684, 693 to 726, 723 to 758, and 788 to 822; these read KEQRQFRNIFRQIAGDDMEICADELKNVLNRVVNK, FTLESCRSMIALMDTDGSGRLNLQEFHHLWKKIK, KKIKTWQKIFKHYDTDQSGTINSYEMRNAVNDAGFH, and VRLEGMFRAFNAFDKDGDGIIKLNVLEWLQLTMYA. The interval 650 to 822 is domain IV; the sequence is KEQRQFRNIF…LEWLQLTMYA (173 aa). 18 residues coordinate Ca(2+): A663, D666, E668, E673, D706, D708, S710, R712, E717, D736, D738, S740, T742, E747, D801, D803, D805, and I807.

It belongs to the peptidase C2 family. As to quaternary structure, homodimer; via EF-hand domain 4. Interacts with TTN/titin. Interacts with CMYA5; this interaction, which results in CMYA5 proteolysis, may protect CAPN3 from autolysis. Interacts with SIMC1. Interacts with UTP25; the interaction is required for CAPN3 translocation to the nucleolus. Skeletal muscle.

It localises to the cytoplasm. The protein localises to the nucleus. It is found in the nucleolus. It catalyses the reaction Broad endopeptidase activity.. Activated by micromolar concentrations of calcium and inhibited by calpastatin. Its function is as follows. Calcium-regulated non-lysosomal thiol-protease. Proteolytically cleaves CTBP1. Mediates, with UTP25, the proteasome-independent degradation of p53/TP53. The sequence is that of Calpain-3 (CAPN3) from Ovis aries (Sheep).